We begin with the raw amino-acid sequence, 654 residues long: Peptide-N(4)-(N-acetyl-beta-glucosaminyl)asparagine amidase (654 aa).

At Ala-2 the chain carries N-acetylalanine. A PUB domain is found at 30–91; the sequence is EASKLLLTYA…EGETHLIFPK (62 aa). The interval 112–163 is disordered; it reads RLDGSNKSHKVKSSQQPAASTQLPTTPSSNPSGLNQHTRNRQGQSSDPPSAS. Over residues 124–163 the composition is skewed to polar residues; the sequence is SSQQPAASTQLPTTPSSNPSGLNQHTRNRQGQSSDPPSAS. Thr-137 carries the post-translational modification Phosphothreonine. Cys-250, Cys-253, Cys-283, and Cys-286 together coordinate Zn(2+). Cys-309 serves as the catalytic Nucleophile. Residues His-336 and Asp-353 contribute to the active site. One can recognise a PAW domain in the interval 454 to 654; that stretch reads ELGGRISGSV…LEIIIKFSDL (201 aa).

It belongs to the transglutaminase-like superfamily. PNGase family. In terms of assembly, component of a complex required to couple retrotranslocation, ubiquitination and deglycosylation composed of NGLY1, SAKS1, AMFR, VCP and RAD23B. Interacts with the proteasome components RAD23B and PSMC1. Interacts with directly with VCP. Interacts with DERL1, bringing it close to the endoplasmic reticulum membrane. Interacts with SAKS1. Zn(2+) serves as cofactor.

It is found in the cytoplasm. The catalysed reaction is Hydrolysis of an N(4)-(acetyl-beta-D-glucosaminyl)asparagine residue in which the glucosamine residue may be further glycosylated, to yield a (substituted) N-acetyl-beta-D-glucosaminylamine and a peptide containing an aspartate residue.. Its activity is regulated as follows. Inhibited by Z-VAD-fmk, a well-known caspase inhibitor, which inhibits enzyme activity through covalent binding of the carbohydrate to the single Cys-306 residue. In terms of biological role, specifically deglycosylates the denatured form of N-linked glycoproteins in the cytoplasm and assists their proteasome-mediated degradation. Cleaves the beta-aspartyl-glucosamine (GlcNAc) of the glycan and the amide side chain of Asn, converting Asn to Asp. Prefers proteins containing high-mannose over those bearing complex type oligosaccharides. Can recognize misfolded proteins in the endoplasmic reticulum that are exported to the cytosol to be destroyed and deglycosylate them, while it has no activity toward native proteins. Deglycosylation is a prerequisite for subsequent proteasome-mediated degradation of some, but not all, misfolded glycoproteins. The polypeptide is Peptide-N(4)-(N-acetyl-beta-glucosaminyl)asparagine amidase (NGLY1) (Homo sapiens (Human)).